The following is a 209-amino-acid chain: MNDNLKSSGIMLVISSPSGGGKTTISHLLIDELQNDLVRSVSVTTREPRDGEVNGKDYFFVTEHEFINLCNTDQMLEYAKVFGNYYGIPRKFVMDNITTGVSVLFSIDWQGAFKLIDIMREHVVSVFILPPSMEELRRRLYNRSGKSDIVKKRLGEAAFEIDHCYRYDYVIVNHDVEESVHQIKCIFTSERLRVQRRILLKQFIDNYIK.

Positions 9–188 (GIMLVISSPS…SVHQIKCIFT (180 aa)) constitute a Guanylate kinase-like domain. 16-23 (SPSGGGKT) provides a ligand contact to ATP.

Belongs to the guanylate kinase family.

It localises to the cytoplasm. The catalysed reaction is GMP + ATP = GDP + ADP. In terms of biological role, essential for recycling GMP and indirectly, cGMP. In Ehrlichia canis (strain Jake), this protein is Guanylate kinase.